The sequence spans 182 residues: Plasmolipin (182 aa).

Residues 1 to 20 (MAEFPSKVNTRTSSPAQGGG) form a disordered region. Residues 1 to 35 (MAEFPSKVNTRTSSPAQGGGAVVSTLSPDLGFVRS) are Cytoplasmic-facing. Positions 7-16 (KVNTRTSSPA) are enriched in polar residues. The MARVEL domain maps to 32-166 (FVRSSLGALM…SAFLSFQAWR (135 aa)). Residues 36–56 (SLGALMLLQLVLGLLVWALIA) form a helical membrane-spanning segment. The Extracellular portion of the chain corresponds to 57–68 (DTPYHLYPSYGW). The helical transmembrane segment at 69 to 89 (VMFVAVFLWLVTIIFFVLYLF) threads the bilayer. Residues 90–99 (QLHMKLYMVP) are Cytoplasmic-facing. A helical transmembrane segment spans residues 100–120 (WPLVLMVFNVGATVLYITAFI). Residues 121–141 (TCSASVELTSLKGSQPYNQRA) are Extracellular-facing. Residues 142-162 (AASFFSCLVMIAYGVSAFLSF) form a helical membrane-spanning segment. Over 163-182 (QAWRGVGSNAATSQMAGGYA) the chain is Cytoplasmic.

It belongs to the MAL family. In terms of assembly, forms oligomers. Post-translationally, phosphorylated.

It localises to the cell membrane. It is found in the myelin membrane. The protein resides in the apical cell membrane. Main component of the myelin sheath that plays an important role in myelin membrane biogenesis and myelination. Plays an essential function in apical endocytosis. Regulates epithelial development through the regulation of apical endocytosis. Part of the intracellular machinery that mediates basolateral-to-apical transport of ICAM-1, an essential adhesion receptor in epithelial cells, from the subapical compartment in hepatic epithelial cells. In Bos taurus (Bovine), this protein is Plasmolipin (PLLP).